We begin with the raw amino-acid sequence, 312 residues long: Cytoplasmic dynein intermediate light chain DYN3 (312 aa).

It belongs to the dynein light intermediate chain DYN3 family. The dynein complex consists of at least two heavy chains and a number of intermediate and light chains. Interacts with DYN1.

It localises to the cytoplasm. It is found in the cytoskeleton. In terms of biological role, component of the cytoplasmic dynein which acts as a motor for the intracellular retrograde motility of vesicles and organelles along microtubules. May play an important role in the proper orientation of the mitotic spindle into the budding daughter cell yeast. Probably required for normal progression of the cell cycle. This is Cytoplasmic dynein intermediate light chain DYN3 (DYN3) from Saccharomyces cerevisiae (strain ATCC 204508 / S288c) (Baker's yeast).